Consider the following 363-residue polypeptide: Disease resistance protein RBA1 (363 aa).

In terms of domain architecture, TIR spans 12-175; the sequence is PVPKVFLSFR…EIVKEVERVL (164 aa). Residues 21–26 and Gly53 contribute to the NAD(+) site; that span reads RGEEIR. Residue Glu86 is part of the active site.

In terms of assembly, homooligomer; homooligomerization is required for activity.

It is found in the cytoplasm. Its subcellular location is the nucleus. The protein resides in the nucleoplasm. The catalysed reaction is NAD(+) + H2O = ADP-D-ribose + nicotinamide + H(+). It catalyses the reaction NADP(+) + H2O = ADP-D-ribose 2'-phosphate + nicotinamide + H(+). Functionally, disease resistance (R) protein that specifically recognizes the HopBA1 type III effector protein from P.syringae, and triggers cell death. Acts as a NAD(+) hydrolase (NADase): in response to pathogen-recognition, catalyzes cleavage of NAD(+) into ADP-D-ribose (ADPR) and nicotinamide; NAD(+) cleavage triggering a defense system that promotes cell death. In addition to ADPR, also generates a cyclization variant of cyclic ADPR (cADPR), termed v-cADPR, for which the cyclizing bond is unknown. Also able to hydrolyze NADP(+), but not other NAD(+)-related molecules. This Arabidopsis thaliana (Mouse-ear cress) protein is Disease resistance protein RBA1.